Here is an 860-residue protein sequence, read N- to C-terminus: DNA mismatch repair protein MutS (860 aa).

607–614 (GPNMSGKS) contributes to the ATP binding site.

The protein belongs to the DNA mismatch repair MutS family.

This protein is involved in the repair of mismatches in DNA. It is possible that it carries out the mismatch recognition step. This protein has a weak ATPase activity. The protein is DNA mismatch repair protein MutS of Listeria innocua serovar 6a (strain ATCC BAA-680 / CLIP 11262).